Reading from the N-terminus, the 560-residue chain is 2-hydroxyacyl-CoA lyase (560 aa).

E49 serves as a coordination point for thiamine diphosphate. 2 residues coordinate Mg(2+): D446 and N473. The short motif at 558–560 is the Peroxisomal target signal 1 (PTS1) element; that stretch reads PRL.

This sequence belongs to the TPP enzyme family. It depends on Mg(2+) as a cofactor. Thiamine diphosphate is required as a cofactor.

The protein localises to the cytoplasm. Its subcellular location is the peroxisome matrix. The enzyme catalyses an (R)-2-hydroxy-long-chain-fatty acyl-CoA = a long-chain fatty aldehyde + formyl-CoA. It catalyses the reaction a 2-hydroxy-3-methyl fatty acyl-CoA = a 2-methyl-branched fatty aldehyde + formyl-CoA. Functionally, catalyzes a carbon-carbon cleavage reaction; cleaves a 2-hydroxy-3-methylacyl-CoA into formyl-CoA and a 2-methyl-branched fatty aldehyde. This chain is 2-hydroxyacyl-CoA lyase, found in Saccharomyces cerevisiae (strain ATCC 204508 / S288c) (Baker's yeast).